A 131-amino-acid chain; its full sequence is UPF0134 protein MPN_010 (131 aa).

Belongs to the UPF0134 family.

This is UPF0134 protein MPN_010 from Mycoplasma pneumoniae (strain ATCC 29342 / M129 / Subtype 1) (Mycoplasmoides pneumoniae).